We begin with the raw amino-acid sequence, 164 residues long: Small ribosomal subunit protein uS3m (164 aa).

A mitochondrion-targeting transit peptide spans 1 to 23; the sequence is MLRSIQHVEALSSRQISTTSMLL.

This sequence belongs to the universal ribosomal protein uS3 family. Component of the mitochondrial ribosome small subunit (28S) which comprises a 12S rRNA and about 30 distinct proteins.

The protein resides in the mitochondrion. This chain is Small ribosomal subunit protein uS3m (mrps-24), found in Caenorhabditis elegans.